The primary structure comprises 407 residues: MVDWSTLPKDLLDLISKSLESSFDLIQFRSVCSSWRSAAEPKSPLPTHHLPILPDNGGSLFPDSAVGFRLSQRSILLIKPHEPCIESDSFGWLIKVEEDLNVPRKVTLLDPLCDTRNSIPENFPRVLDMSKFKVRELGREFKLHYFNTVGDIVESLYLEKAVVKYLDCDGDYKFVLLTIHVSGKLAVFRSWDRAWTVINDMPSPYDDVMLFDGRFFAVDNNGRTVVVDYSSLKLTLVASPVFGGDKKFLIESCGEMLLVDMYLSLEAVEGDPGFVEEIFEHPAFYMNERTVKFKVYRFVEREESWVDVYDLEDKMLFLGDDSTFSASASDILPLCDGSSVFFNGNVFNGEDLGAMQDRDLGVFDFRSGKIELVQKLPEYAKLFWPPPPWITSHARAEDHIGETSSQS.

The 49-residue stretch at 2 to 50 folds into the F-box domain; that stretch reads VDWSTLPKDLLDLISKSLESSFDLIQFRSVCSSWRSAAEPKSPLPTHHL.

In terms of assembly, part of a SCF (ASK-cullin-F-box) protein ligase complex. Interacts with SKP1A/ASK1.

The protein resides in the nucleus. It functions in the pathway protein modification; protein ubiquitination. Its function is as follows. Component of SCF(ASK-cullin-F-box) E3 ubiquitin ligase complexes, which may mediate the ubiquitination and subsequent proteasomal degradation of target proteins. The chain is F-box protein SKIP23 (SKIP23) from Arabidopsis thaliana (Mouse-ear cress).